A 521-amino-acid chain; its full sequence is Exodeoxyribonuclease 7 large subunit (521 aa).

The segment at 494-521 (ATSGAARPKPAAKPSTKAKEPGNQGSLF) is disordered. A compositionally biased stretch (low complexity) spans 498–508 (AARPKPAAKPS).

It belongs to the XseA family. Heterooligomer composed of large and small subunits.

It localises to the cytoplasm. It catalyses the reaction Exonucleolytic cleavage in either 5'- to 3'- or 3'- to 5'-direction to yield nucleoside 5'-phosphates.. Its function is as follows. Bidirectionally degrades single-stranded DNA into large acid-insoluble oligonucleotides, which are then degraded further into small acid-soluble oligonucleotides. The protein is Exodeoxyribonuclease 7 large subunit of Mesorhizobium japonicum (strain LMG 29417 / CECT 9101 / MAFF 303099) (Mesorhizobium loti (strain MAFF 303099)).